The following is a 412-amino-acid chain: Mannose-6-phosphate isomerase (412 aa).

Residues Gln99, His101, Glu126, and His265 each coordinate Zn(2+). Residue Arg284 is part of the active site.

Belongs to the mannose-6-phosphate isomerase type 1 family. It depends on Zn(2+) as a cofactor.

It localises to the cytoplasm. Its subcellular location is the nucleus. The enzyme catalyses D-mannose 6-phosphate = D-fructose 6-phosphate. Its pathway is nucleotide-sugar biosynthesis; GDP-alpha-D-mannose biosynthesis; alpha-D-mannose 1-phosphate from D-fructose 6-phosphate: step 1/2. Its function is as follows. Involved in the synthesis of the GDP-mannose and dolichol-phosphate-mannose required for a number of critical mannosyl transfer reactions. The protein is Mannose-6-phosphate isomerase (pmi40) of Schizosaccharomyces pombe (strain 972 / ATCC 24843) (Fission yeast).